A 294-amino-acid chain; its full sequence is Zinc finger protein CONSTANS-LIKE 3 (294 aa).

C8, C11, C31, H36, C51, C54, C74, and H79 together coordinate Zn(2+). The B box-type 1; atypical zinc-finger motif lies at C8–L50. Residues C51–I93 form a B box-type 2; atypical zinc finger. In terms of domain architecture, CCT spans R229–R271.

It belongs to the CONSTANS family.

It localises to the nucleus. This Arabidopsis thaliana (Mouse-ear cress) protein is Zinc finger protein CONSTANS-LIKE 3 (COL3).